A 245-amino-acid chain; its full sequence is Transmembrane and ubiquitin-like domain-containing protein 1 (245 aa).

The tract at residues 2-30 (ALIEGVGDEVTVLFSVLACLLVLALAWVS) is required to release iHOPS from membranes. A helical membrane pass occupies residues 11–31 (VTVLFSVLACLLVLALAWVST). The span at 34-51 (TESTDPLPQSSGTTTPAQ) shows a compositional bias: polar residues. The tract at residues 34-100 (TESTDPLPQS…ASTPPDSPQE (67 aa)) is disordered. 3 positions are modified to phosphoserine: S73, S97, and S126. The Ubiquitin-like domain maps to 102–175 (LLLRLKFLND…LHCHVSTRVG (74 aa)). 2 helical membrane passes run 194-214 (IGSL…YCQI) and 219-239 (FFPL…SLLA).

Interacts with EEF1A1, GRIA2, GRIP1. Interacts with CAMLG, TUBG1. Interacts with NPM1 and CDKN2A; TMUB1 can enhance interaction between NPM1 and CDKN2A and is proposed to bridge the proteins; proposed to be mediated by iHOPS. Interacts with ERLIN2 and AMFR; TMUB1 promotes the interaction of ERLIN2 with AMFR. In terms of processing, processed by regulated intramembrane proteolysis (RIP) in the N-terminus to release iHOPS from membranes.

The protein localises to the membrane. The protein resides in the postsynaptic cell membrane. Its subcellular location is the recycling endosome. It localises to the cytoplasm. It is found in the cytoskeleton. The protein localises to the microtubule organizing center. The protein resides in the centrosome. Its subcellular location is the nucleus. It localises to the nucleolus. Functionally, involved in sterol-regulated ubiquitination and degradation of HMG-CoA reductase HMGCR. Involved in positive regulation of AMPA-selective glutamate receptor GRIA2 recycling to the cell surface. Acts as a negative regulator of hepatocyte growth during regeneration. Its function is as follows. May contribute to the regulation of translation during cell-cycle progression. May contribute to the regulation of cell proliferation. May be involved in centrosome assembly. Modulates stabilization and nucleolar localization of tumor suppressor CDKN2A and enhances association between CDKN2A and NPM1. In Rattus norvegicus (Rat), this protein is Transmembrane and ubiquitin-like domain-containing protein 1 (Tmub1).